Reading from the N-terminus, the 221-residue chain is Epididymal secretory glutathione peroxidase (221 aa).

Residues 1-21 form the signal peptide; it reads MTTQLRVVHLLPLLLACFVQT. Residue cysteine 73 is part of the active site.

The protein belongs to the glutathione peroxidase family. In terms of tissue distribution, epididymis.

It is found in the secreted. The enzyme catalyses 2 glutathione + H2O2 = glutathione disulfide + 2 H2O. Functionally, protects cells and enzymes from oxidative damage, by catalyzing the reduction of hydrogen peroxide, lipid peroxides and organic hydroperoxide, by glutathione. May constitute a glutathione peroxidase-like protective system against peroxide damage in sperm membrane lipids. The protein is Epididymal secretory glutathione peroxidase (GPX5) of Macaca fascicularis (Crab-eating macaque).